The following is a 584-amino-acid chain: MNDLLKNKLKLIPHKPGCYLWKDQFNQIIYIGKAKDLYNRTHSYFNGCKDNKTSKLVNNINDLEYIVVNNVNEALILENNLIKTHLPKYNILLKDGSNYPYIMITNEQYPRLKYVRTYDKNKGIYFGPLADSTNKYQLFNLLNSIFPFNKCNHQPYKKCIYYDLHQCINQVQQSTYQEAISEVKEIFKGNLDHILMILQTKEQHAVTKLDFENAQKYAEQQKALTSIINSGLVQLDNNESFDIIGFYEKNNYLVIIIFNYVKGKLLNKSADTFAIYDYEINELITSFLMQYYSQNKISSKIIVSLDDDNLLALSQRFHTKFINAQTKFHKRILKLALDNAILYFESNIKNVINKQNELDDALNQLKQILKLPDLNIIECFDNSNINLSLPIAGMIVYQNGKLNNKLNRKYNLMTTKNASDYHFMIEVITRRYQRLVSQHQKLPNLIVVDGGKLQVNAALYALAQLQINIPLIGLKKDQKHKTDAIVLTNGDEIVLDRKSILYKFLANMQNDVHNYAISFLRDKHTKSIFNSLLDNVQGLGKKRFNELLKYYDSINDLKSASDQELLQFLPKNVLVNLREKLNKI.

The GIY-YIG domain maps to 14-91 (HKPGCYLWKD…IKTHLPKYNI (78 aa)). The UVR domain occupies 192-227 (DHILMILQTKEQHAVTKLDFENAQKYAEQQKALTSI).

The protein belongs to the UvrC family. Interacts with UvrB in an incision complex.

The protein localises to the cytoplasm. Functionally, the UvrABC repair system catalyzes the recognition and processing of DNA lesions. UvrC both incises the 5' and 3' sides of the lesion. The N-terminal half is responsible for the 3' incision and the C-terminal half is responsible for the 5' incision. The sequence is that of UvrABC system protein C from Ureaplasma parvum serovar 3 (strain ATCC 27815 / 27 / NCTC 11736).